A 1222-amino-acid polypeptide reads, in one-letter code: BOS complex subunit NOMO3 (1222 aa).

An N-terminal signal peptide occupies residues 1-31; it reads MLVGQGAGPLGPAVVTAAVVLLLSGVGPAHG. Over 32 to 1155 the chain is Extracellular; sequence SEDIVVGCGG…NPTRKLPEQD (1124 aa). Residues Asn-50, Asn-218, and Asn-618 are each glycosylated (N-linked (GlcNAc...) asparagine). The helical transmembrane segment at 1156–1176 threads the bilayer; that stretch reads IAQGSYIALPLTLLVLLAGYN. The Cytoplasmic segment spans residues 1177-1222; the sequence is HDKLIPLLLQLTSRLQGVGALGQAASDNSGPEDAKRQAKKQKTRRT. The tract at residues 1198–1222 is disordered; it reads GQAASDNSGPEDAKRQAKKQKTRRT. Positions 1213–1222 are enriched in basic residues; it reads QAKKQKTRRT.

In terms of assembly, component of the back of Sec61 (BOS) complex, composed of NCLN/Nicalin, NOMO (NOMO1, NOMO2 or NOMO3) and TMEM147. The BOS complex is part of the multi-pass translocon (MPT) complex, composed of three subcomplexes, the GEL complex (composed of RAB5IF/OPTI and TMCO1), the BOS complex (composed of NCLN/Nicalin, NOMO and TMEM147) and the PAT complex (composed of WDR83OS/Asterix and CCDC47). The MPT complex associates with the SEC61 complex. Due to the strong similarity between NOMO1, NOMO2 and NOMO3, similar interaction pattern probably occur for the three gene copies.

The protein localises to the endoplasmic reticulum membrane. In terms of biological role, component of the multi-pass translocon (MPT) complex that mediates insertion of multi-pass membrane proteins into the lipid bilayer of membranes. The MPT complex takes over after the SEC61 complex: following membrane insertion of the first few transmembrane segments of proteins by the SEC61 complex, the MPT complex occludes the lateral gate of the SEC61 complex to promote insertion of subsequent transmembrane regions. The polypeptide is BOS complex subunit NOMO3 (NOMO3) (Homo sapiens (Human)).